Here is a 425-residue protein sequence, read N- to C-terminus: Inositol hexakisphosphate kinase 2 (425 aa).

Residues glutamate 206 to leucine 208 and aspartate 219 contribute to the ATP site. Substrate-binding positions include proline 215–glycine 223, lysine 221, and lysine 235–lysine 242. Aspartate 382 contributes to the ATP binding site. Histidine 385 provides a ligand contact to substrate.

This sequence belongs to the inositol phosphokinase (IPK) family. As to expression, detected in kidney, intestine, liver and heart.

The protein localises to the nucleus. It catalyses the reaction 1D-myo-inositol hexakisphosphate + ATP = 5-diphospho-1D-myo-inositol 1,2,3,4,6-pentakisphosphate + ADP. Its pathway is phospholipid metabolism; phosphatidylinositol metabolism. Converts inositol hexakisphosphate (InsP6) to diphosphoinositol pentakisphosphate (InsP7/PP-InsP5). The sequence is that of Inositol hexakisphosphate kinase 2 (IP6K2) from Oryctolagus cuniculus (Rabbit).